Reading from the N-terminus, the 234-residue chain is Polycomb group RING finger protein 5-A (234 aa).

The segment at 18–57 (CSICRGYLIKPTAVTECLHTFCKSCIVQHFEESNECPECG) adopts an RING-type zinc-finger fold. Positions 97–130 (FWRKHKIKSNGEDGPRAKKSRLSGEDDDGNGGDY) are disordered.

As to quaternary structure, component of a PRC1-like complex.

It localises to the nucleus. Component of Polycomb group (PcG) multiprotein complexes; the complex class is required to maintain the transcriptionally repressive state of some genes. The protein is Polycomb group RING finger protein 5-A of Danio rerio (Zebrafish).